The sequence spans 199 residues: Large ribosomal subunit protein eL13A (199 aa).

Residues Thr-144 and Thr-152 each carry the phosphothreonine modification.

It belongs to the eukaryotic ribosomal protein eL13 family. In terms of assembly, component of the large ribosomal subunit (LSU). Mature yeast ribosomes consist of a small (40S) and a large (60S) subunit. The 40S small subunit contains 1 molecule of ribosomal RNA (18S rRNA) and 33 different proteins (encoded by 57 genes). The large 60S subunit contains 3 rRNA molecules (25S, 5.8S and 5S rRNA) and 46 different proteins (encoded by 81 genes).

The protein localises to the cytoplasm. In terms of biological role, component of the ribosome, a large ribonucleoprotein complex responsible for the synthesis of proteins in the cell. The small ribosomal subunit (SSU) binds messenger RNAs (mRNAs) and translates the encoded message by selecting cognate aminoacyl-transfer RNA (tRNA) molecules. The large subunit (LSU) contains the ribosomal catalytic site termed the peptidyl transferase center (PTC), which catalyzes the formation of peptide bonds, thereby polymerizing the amino acids delivered by tRNAs into a polypeptide chain. The nascent polypeptides leave the ribosome through a tunnel in the LSU and interact with protein factors that function in enzymatic processing, targeting, and the membrane insertion of nascent chains at the exit of the ribosomal tunnel. The protein is Large ribosomal subunit protein eL13A of Saccharomyces cerevisiae (strain ATCC 204508 / S288c) (Baker's yeast).